We begin with the raw amino-acid sequence, 155 residues long: Small ribosomal subunit protein uS7c (155 aa).

Belongs to the universal ribosomal protein uS7 family. Part of the 30S ribosomal subunit.

The protein resides in the plastid. It localises to the chloroplast. Functionally, one of the primary rRNA binding proteins, it binds directly to 16S rRNA where it nucleates assembly of the head domain of the 30S subunit. This is Small ribosomal subunit protein uS7c (rps7) from Ginkgo biloba (Ginkgo).